The sequence spans 632 residues: Phosphatidylinositol 3,4,5-trisphosphate 3-phosphatase and protein-tyrosine-phosphatase PTEN2B (632 aa).

Over residues 1–12 (METDPANSSSKS) the composition is skewed to polar residues. The segment at 1–98 (METDPANSSS…RESPPSIFSS (98 aa)) is disordered. Residues 39 to 48 (SAEREAHEDS) are compositionally biased toward basic and acidic residues. A compositionally biased stretch (polar residues) spans 63 to 73 (MPASSTGSEPL). Residues 87 to 98 (SPRESPPSIFSS) are compositionally biased toward low complexity. Residues 189–368 (RRYQEGEFDL…KYYERVQNQF (180 aa)) form the Phosphatase tensin-type domain. Catalysis depends on C307, which acts as the Phosphocysteine intermediate. The region spanning 375-502 (ERRCMLRGFR…FHVEIVMIEP (128 aa)) is the C2 tensin-type domain. Residues 504–603 (NSQPTKSKSD…SGHYNPIPNN (100 aa)) form a disordered region. Residues 505–527 (SQPTKSKSDSTQQQSQSSSSADS) are compositionally biased toward low complexity. Residues 535–549 (KDDDVFSDSDGEEEG) show a composition bias toward acidic residues. The residue at position 541 (S541) is a Phosphoserine. The span at 550–571 (NSQSYSTNEKTASSMHTTSKPH) shows a compositional bias: polar residues. A compositionally biased stretch (low complexity) spans 584 to 594 (ANRSVTSSSSS).

This sequence belongs to the PTEN phosphatase protein family. Expressed, at low levels, in seedlings, roots, stems, leaves, flowers and siliques. However, at protein level, not observed in older leaves, flowers and siliques.

The enzyme catalyses O-phospho-L-tyrosyl-[protein] + H2O = L-tyrosyl-[protein] + phosphate. The catalysed reaction is a 1,2-diacyl-sn-glycero-3-phospho-(1D-myo-inositol-3,4,5-trisphosphate) + H2O = a 1,2-diacyl-sn-glycero-3-phospho-(1D-myo-inositol-4,5-bisphosphate) + phosphate. Protein tyrosine phosphatase that also exhibits a weak lipid phosphatase activity towards PtdIns(3)P. This is Phosphatidylinositol 3,4,5-trisphosphate 3-phosphatase and protein-tyrosine-phosphatase PTEN2B from Arabidopsis thaliana (Mouse-ear cress).